We begin with the raw amino-acid sequence, 1462 residues long: Copper-transporting ATPase 2 (1462 aa).

Residues 1 to 23 (MDPRKNLASVGTMPEQERQVTAK) are disordered. The Cytoplasmic portion of the chain corresponds to 1 to 655 (MDPRKNLASV…KTEIKQWKKS (655 aa)). HMA domains follow at residues 68 to 134 (ATDV…FEAS), 153 to 219 (AVVK…FEAA), 267 to 333 (ATLP…PGHF), and 361 to 427 (RTAV…FEVS). Cu(+) is bound by residues Cys-79, Cys-82, Cys-164, Cys-167, Cys-278, and Cys-281. The tract at residues 333-361 (FKVSLPDGVEENEPQSGSSQRHQEQGPGR) is disordered. A Cu(+)-binding site is contributed by Cys-372. The disordered stretch occupies residues 460–487 (KMAPDTRGLPTHQGPGHSSETPSSPGAT). Residues 475-487 (GHSSETPSSPGAT) show a composition bias toward polar residues. Phosphoserine is present on residues Ser-478 and Ser-483. 2 consecutive HMA domains span residues 490 to 556 (QKCF…FEAS) and 566 to 632 (GDIE…FHAS). 4 residues coordinate Cu(+): Cys-501, Cys-504, Cys-577, and Cys-580. Residues 656–677 (FLCSLVFGIPVMGLMVYMLIPS) traverse the membrane as a helical segment. Topologically, residues 678-699 (STPQETMVLDHNIIPGLSVLNL) are extracellular. A helical transmembrane segment spans residues 700–719 (IFFILCTFVQFLGGWYFYVQ). The Cytoplasmic portion of the chain corresponds to 720-726 (AYKSLRH). A helical transmembrane segment spans residues 727-747 (RSANMDVLIVLATTIAYAYSL). The Extracellular portion of the chain corresponds to 748–766 (VILVVAVAEKAEKSPVTFF). The helical transmembrane segment at 767-787 (DTPPMLFVFIALGRWLEHVAK) threads the bilayer. Over 788–921 (SKTSEALAKL…KAPIQQLADR (134 aa)) the chain is Cytoplasmic. The chain crosses the membrane as a helical span at residues 922–944 (FSGYFVPFIIIISTLTLVVWIVI). Over 945-974 (GFVDFGVVQKYFPSPSKHISQTEVIIRFAF) the chain is Extracellular. A helical membrane pass occupies residues 975–996 (QTSITVLCIACPCSLGLATPTA). The Cytoplasmic portion of the chain corresponds to 997–1319 (VMVGTGVAAQ…LSKRTVRRIR (323 aa)). Catalysis depends on Asp-1029, which acts as the 4-aspartylphosphate intermediate. The Mg(2+) site is built by Asp-1264 and Asp-1268. Residues 1320-1337 (VNLVLALIYNMVGIPIAA) form a helical membrane-spanning segment. The Extracellular segment spans residues 1338–1348 (GVFMPIGIVLQ). A helical membrane pass occupies residues 1349 to 1368 (PWMGSAAMAASSVSVVLSSL). The Cytoplasmic portion of the chain corresponds to 1369–1462 (QLKCYRKPDL…LSDRDEEQCI (94 aa)). Phosphoserine is present on residues Ser-1395 and Ser-1454.

It belongs to the cation transport ATPase (P-type) (TC 3.A.3) family. Type IB subfamily. Monomer. Interacts with COMMD1/MURR1. Interacts with DCTN4, in a copper-dependent manner. Interacts with ATOX1. Interacts (via C-terminus) with ZBTB16/PLZF. Detected in liver and kidney.

The protein resides in the golgi apparatus. The protein localises to the trans-Golgi network membrane. It localises to the late endosome. The catalysed reaction is Cu(+)(in) + ATP + H2O = Cu(+)(out) + ADP + phosphate + H(+). Copper ion transmembrane transporter involved in the export of copper out of the cells, such as the efflux of hepatic copper into the bile. The protein is Copper-transporting ATPase 2 (Atp7b) of Mus musculus (Mouse).